Reading from the N-terminus, the 281-residue chain is Aspartate/glutamate leucyltransferase (281 aa).

This sequence belongs to the R-transferase family. Bpt subfamily.

Its subcellular location is the cytoplasm. The enzyme catalyses N-terminal L-glutamyl-[protein] + L-leucyl-tRNA(Leu) = N-terminal L-leucyl-L-glutamyl-[protein] + tRNA(Leu) + H(+). The catalysed reaction is N-terminal L-aspartyl-[protein] + L-leucyl-tRNA(Leu) = N-terminal L-leucyl-L-aspartyl-[protein] + tRNA(Leu) + H(+). Its function is as follows. Functions in the N-end rule pathway of protein degradation where it conjugates Leu from its aminoacyl-tRNA to the N-termini of proteins containing an N-terminal aspartate or glutamate. This chain is Aspartate/glutamate leucyltransferase, found in Paracoccus denitrificans (strain Pd 1222).